Consider the following 794-residue polypeptide: MAAKDGAKSQEDYKLKDMKPELGERWPHGGQRGGTGWIGSERAASTYDLVEQMFYLYVRVVKAKDLPPNPVTSNCDPYVEVKIGNYKGKTKHFEKRTNPEWNQVFAFSKDKVQSSTVEVFVRDKEMVTRDEYIGKVVFDMREVPTRVPPDSPLAPQWYRLEDRRGESKKRGEVMVAVWLGTQADEAFPDAWHSDASSVQGEGVQSVRSKVYVSPKLWYLRVNVIEAQDVEPSDRSQPPQAFVKVQVGNQILKTKLCPNKTTNPMWNEDLVFVAAEPFEEQFFLTVENKVTPAKDEVMGRLISPLSVFEKRLDHRAVHSKWYNLEKFGFGALEGDKRHELKFSSRIHLRVCLEGGYHVMDESTLYISDVKPTARQLWKSPIGILEVGILSAQGLSPMKTKDGKATTDPYCVAKYGQKWVRTRTIIDSSSPKWNEQYTWEVYDPCTVITLGVFDNCHLGGSEKSNSGAKVDSRIGKVRIRLSTLEADRIYTHSYPLLVLQTKGLKKMGEVQLAVRFTCLSLAHMIYLYGHPLLPKMHYLHPFTVNQLDSLRYQAMSIVAARLSRAEPPLRKENVEYMLDVDSHMWSMRRSKANFFRIVSVFAGLIAMSKWLGDVCYWKNPLTTILFHVLFFILICYPELILPTTFLYMFLIGLWNFRFRPRHPAHMDTKVSWAEAASPDELDEEFDTFPTSKGQDVVKMRYDRLRSVAGRIQMVVGDIATQGERFQALLSWRDPRATCLFVIFCLVAAMILYVTPFKIIALAGGMFWMRHPKFRSKMPSAPSNFFRKLPSKADCML.

The span at 1–27 shows a compositional bias: basic and acidic residues; the sequence is MAAKDGAKSQEDYKLKDMKPELGERWP. The segment at 1–34 is disordered; sequence MAAKDGAKSQEDYKLKDMKPELGERWPHGGQRGG. 3 C2 domains span residues 37–158, 198–321, and 364–492; these read WIGS…PQWY, VQGE…SKWY, and YISD…THSY. The Ca(2+) site is built by Asp76, Asp123, Glu125, and Glu131. Helical transmembrane passes span 510–532, 595–615, 619–639, and 737–757; these read LAVR…PLLP, IVSV…VCYW, LTTI…ELIL, and LFVI…FKII.

The protein belongs to the MCTP family. As to quaternary structure, interacts with FT in phloem companion cells. The cofactor is Ca(2+). As to expression, expressed in the vascular tissues of roots, cotyledons and rosette leaves. Specifically located in the phloem including companion cells. Observed in flowers. Not detected in the shoot apical meristem.

The protein resides in the endoplasmic reticulum membrane. The protein localises to the cell junction. It localises to the plasmodesma. Functionally, involved in the export of FT from the phloem companion cells to the sieve elements through the plasmodesmata. Regulates flowering time under long days. May function as a signaling molecule by regulating the trafficking of other regulators. This chain is FT-interacting protein 1, found in Arabidopsis thaliana (Mouse-ear cress).